The sequence spans 486 residues: UDP-N-acetylmuramoyl-L-alanyl-D-glutamate--2,6-diaminopimelate ligase (486 aa).

Ser30 serves as a coordination point for UDP-N-acetyl-alpha-D-muramoyl-L-alanyl-D-glutamate. An ATP-binding site is contributed by Gly112–Thr118. UDP-N-acetyl-alpha-D-muramoyl-L-alanyl-D-glutamate contacts are provided by residues Thr154–Thr155, Ser181, Gln187, and Arg189. The residue at position 221 (Lys221) is an N6-carboxylysine. Meso-2,6-diaminopimelate contacts are provided by residues Arg378, Asp402–Arg405, Gly455, and Glu459. The Meso-diaminopimelate recognition motif signature appears at Asp402 to Arg405.

The protein belongs to the MurCDEF family. MurE subfamily. Mg(2+) serves as cofactor. Carboxylation is probably crucial for Mg(2+) binding and, consequently, for the gamma-phosphate positioning of ATP.

It localises to the cytoplasm. It catalyses the reaction UDP-N-acetyl-alpha-D-muramoyl-L-alanyl-D-glutamate + meso-2,6-diaminopimelate + ATP = UDP-N-acetyl-alpha-D-muramoyl-L-alanyl-gamma-D-glutamyl-meso-2,6-diaminopimelate + ADP + phosphate + H(+). It participates in cell wall biogenesis; peptidoglycan biosynthesis. In terms of biological role, catalyzes the addition of meso-diaminopimelic acid to the nucleotide precursor UDP-N-acetylmuramoyl-L-alanyl-D-glutamate (UMAG) in the biosynthesis of bacterial cell-wall peptidoglycan. This is UDP-N-acetylmuramoyl-L-alanyl-D-glutamate--2,6-diaminopimelate ligase from Cytophaga hutchinsonii (strain ATCC 33406 / DSM 1761 / CIP 103989 / NBRC 15051 / NCIMB 9469 / D465).